Here is a 659-residue protein sequence, read N- to C-terminus: RNA polymerase II subunit A C-terminal domain phosphatase (659 aa).

The region spanning 139 to 303 (ITNRKLVLLV…KNSKEQMPVQ (165 aa)) is the FCP1 homology domain. One can recognise a BRCT domain in the interval 351-443 (ERHKVLDGCV…LKADENLFQL (93 aa)). Positions 484-504 (ALSDDEDDGDNEDEDDDGNDV) are enriched in acidic residues. The interval 484–640 (ALSDDEDDGD…PESDDDDEFE (157 aa)) is disordered. The span at 505–519 (GEDKGDENLEEKQEK) shows a compositional bias: basic and acidic residues. Residues 529–538 (QNGSVENQSG) are compositionally biased toward polar residues. Composition is skewed to acidic residues over residues 560–576 (MEDE…DDDT), 596–607 (ENEDDAVFDVDD), and 616–640 (IDEE…DEFE).

It is found in the nucleus. It catalyses the reaction O-phospho-L-seryl-[protein] + H2O = L-seryl-[protein] + phosphate. It carries out the reaction O-phospho-L-threonyl-[protein] + H2O = L-threonyl-[protein] + phosphate. During the late stages of oogenesis, dephosphorylates 'Ser-5' of the heptad repeats YSPTSPS in the C-terminal domain of the largest RNA polymerase II subunit ama-1. Similarly, dephosphorylates 'Ser-5' of ama-1 in early embryonic cells prior to the activation of the zygotic transcription program at the 4-cell embryonic stage. May dephosphorylate 'Ser-2' of the ama-1 heptad repeats YSPTSPS in embryonic somatic and germline cells. The chain is RNA polymerase II subunit A C-terminal domain phosphatase from Caenorhabditis elegans.